The following is a 214-amino-acid chain: Dephospho-CoA kinase (214 aa).

Residues 4-204 enclose the DPCK domain; the sequence is IVGLTGGIGS…QRYLQLAQQK (201 aa). 12 to 17 contacts ATP; that stretch reads GSGKST.

The protein belongs to the CoaE family.

It is found in the cytoplasm. It carries out the reaction 3'-dephospho-CoA + ATP = ADP + CoA + H(+). Its pathway is cofactor biosynthesis; coenzyme A biosynthesis; CoA from (R)-pantothenate: step 5/5. Catalyzes the phosphorylation of the 3'-hydroxyl group of dephosphocoenzyme A to form coenzyme A. The sequence is that of Dephospho-CoA kinase from Mannheimia succiniciproducens (strain KCTC 0769BP / MBEL55E).